Consider the following 351-residue polypeptide: Dihydroorotate dehydrogenase (quinone) (351 aa).

Residues 61 to 65 and Thr-85 each bind FMN; that span reads AGLDK. Lys-65 is a binding site for substrate. 110–114 contributes to the substrate binding site; the sequence is NRMGF. 2 residues coordinate FMN: Asn-139 and Asn-172. Residue Asn-172 participates in substrate binding. Catalysis depends on Ser-175, which acts as the Nucleophile. A substrate-binding site is contributed by Asn-177. Residues Lys-217 and Thr-245 each contribute to the FMN site. 246 to 247 serves as a coordination point for substrate; sequence NT. FMN is bound by residues Gly-268, Gly-297, and 318-319; that span reads YS.

Belongs to the dihydroorotate dehydrogenase family. Type 2 subfamily. Monomer. FMN is required as a cofactor.

Its subcellular location is the cell membrane. It carries out the reaction (S)-dihydroorotate + a quinone = orotate + a quinol. It participates in pyrimidine metabolism; UMP biosynthesis via de novo pathway; orotate from (S)-dihydroorotate (quinone route): step 1/1. Catalyzes the conversion of dihydroorotate to orotate with quinone as electron acceptor. The protein is Dihydroorotate dehydrogenase (quinone) of Xanthomonas oryzae pv. oryzae (strain PXO99A).